A 437-amino-acid polypeptide reads, in one-letter code: Chaperone SurA (437 aa).

The N-terminal stretch at 1-27 is a signal peptide; that stretch reads MHNHVFKTIARHGLIALFFFFSISAMA. PpiC domains follow at residues 179–280 and 290–388; these read QDEF…KLLN and VDQT…QVLE.

Its subcellular location is the periplasm. It carries out the reaction [protein]-peptidylproline (omega=180) = [protein]-peptidylproline (omega=0). Chaperone involved in the correct folding and assembly of outer membrane proteins. Recognizes specific patterns of aromatic residues and the orientation of their side chains, which are found more frequently in integral outer membrane proteins. May act in both early periplasmic and late outer membrane-associated steps of protein maturation. The chain is Chaperone SurA from Methylobacillus flagellatus (strain ATCC 51484 / DSM 6875 / VKM B-1610 / KT).